The following is a 329-amino-acid chain: DNA-directed RNA polymerase subunit alpha (329 aa).

Residues 1–235 (MVREKVKVST…DLFIPFLHTE (235 aa)) form an alpha N-terminal domain (alpha-NTD) region. The alpha C-terminal domain (alpha-CTD) stretch occupies residues 269–329 (IALKYIFIDQ…KQILGILEKK (61 aa)).

It belongs to the RNA polymerase alpha chain family. In terms of assembly, in plastids the minimal PEP RNA polymerase catalytic core is composed of four subunits: alpha, beta, beta', and beta''. When a (nuclear-encoded) sigma factor is associated with the core the holoenzyme is formed, which can initiate transcription.

Its subcellular location is the plastid. It localises to the chloroplast. The catalysed reaction is RNA(n) + a ribonucleoside 5'-triphosphate = RNA(n+1) + diphosphate. Functionally, DNA-dependent RNA polymerase catalyzes the transcription of DNA into RNA using the four ribonucleoside triphosphates as substrates. The chain is DNA-directed RNA polymerase subunit alpha from Gossypium hirsutum (Upland cotton).